The primary structure comprises 275 residues: Large ribosomal subunit protein uL2c (275 aa).

The segment at 219 to 267 (TVRGSVMNPCDHPHGGGEGRTPIGRTRPLTPWGKPALGKKTRKTKKLSS) is disordered. Over residues 255–264 (LGKKTRKTKK) the composition is skewed to basic residues.

It belongs to the universal ribosomal protein uL2 family. In terms of assembly, part of the 50S ribosomal subunit.

Its subcellular location is the plastid. The protein resides in the chloroplast. The chain is Large ribosomal subunit protein uL2c (rpl2) from Thalassiosira pseudonana (Marine diatom).